The chain runs to 192 residues: ER membrane protein complex subunit 8/9 homolog (192 aa).

One can recognise an MPN domain in the interval 5–135; sequence ISITTEALSK…LVSIDKVGSD (131 aa).

This sequence belongs to the EMC8/EMC9 family.

The protein is ER membrane protein complex subunit 8/9 homolog of Dictyostelium discoideum (Social amoeba).